The primary structure comprises 661 residues: Coagulation factor XIII B chain (661 aa).

The signal sequence occupies residues Met-1 to Ala-20. Sushi domains follow at residues Pro-24–Phe-88, Lys-89–Lys-148, Glu-151–Lys-210, Leu-211–Gly-269, Asn-272–Glu-329, Val-334–Glu-391, Glu-394–Glu-452, Pro-453–Thr-516, Gly-522–Glu-580, and Pro-581–Ile-647. Disulfide bonds link Cys-25/Cys-76, Cys-59/Cys-87, Cys-91/Cys-135, Cys-118/Cys-146, Cys-153/Cys-197, Cys-180/Cys-208, Cys-213/Cys-255, Cys-241/Cys-267, Cys-274/Cys-316, Cys-302/Cys-327, Cys-336/Cys-378, Cys-364/Cys-389, Cys-396/Cys-439, Cys-425/Cys-450, Cys-454/Cys-505, Cys-486/Cys-515, Cys-524/Cys-567, Cys-553/Cys-578, Cys-582/Cys-636, and Cys-616/Cys-646. A glycan (N-linked (GlcNAc...) asparagine) is linked at Asn-162. Residue Asn-545 is glycosylated (N-linked (GlcNAc...) asparagine). Residues Arg-617–Asp-619 carry the Cell attachment site motif.

As to quaternary structure, tetramer of two A chains (F13A1) and two B (F13B) chains.

The protein localises to the secreted. The B chain of factor XIII is not catalytically active, but is thought to stabilize the A subunits and regulate the rate of transglutaminase formation by thrombin. This Homo sapiens (Human) protein is Coagulation factor XIII B chain (F13B).